Here is a 189-residue protein sequence, read N- to C-terminus: ATP synthase subunit b (189 aa).

Residues 7-27 (LLIAALAVAPLAHAAEGGFVG) form a helical membrane-spanning segment.

Belongs to the ATPase B chain family. As to quaternary structure, F-type ATPases have 2 components, F(1) - the catalytic core - and F(0) - the membrane proton channel. F(1) has five subunits: alpha(3), beta(3), gamma(1), delta(1), epsilon(1). F(0) has three main subunits: a(1), b(2) and c(10-14). The alpha and beta chains form an alternating ring which encloses part of the gamma chain. F(1) is attached to F(0) by a central stalk formed by the gamma and epsilon chains, while a peripheral stalk is formed by the delta and b chains.

Its subcellular location is the cell inner membrane. F(1)F(0) ATP synthase produces ATP from ADP in the presence of a proton or sodium gradient. F-type ATPases consist of two structural domains, F(1) containing the extramembraneous catalytic core and F(0) containing the membrane proton channel, linked together by a central stalk and a peripheral stalk. During catalysis, ATP synthesis in the catalytic domain of F(1) is coupled via a rotary mechanism of the central stalk subunits to proton translocation. Functionally, component of the F(0) channel, it forms part of the peripheral stalk, linking F(1) to F(0). The protein is ATP synthase subunit b of Hyphomonas neptunium (strain ATCC 15444).